The chain runs to 902 residues: U3 small nucleolar RNA-associated protein 21 homolog (902 aa).

14 WD repeats span residues 40–71 (DIEA…LLFV), 80–110 (TCLK…WDID), 119–154 (THLD…LHTT), 164–198 (TSLL…RVHE), 206–243 (GITS…MEFK), 249–284 (LSCS…QNVT), 289–332 (FGSL…RSRN), 339–373 (SFVK…QSTE), 399–438 (TALS…GQHV), 447–481 (VRSV…KRKS), 492–528 (VTAV…DSLD), 533–568 (ITHA…VREL), 570–611 (GHSN…DSIS), and 613–651 (PSVC…KHVS).

As to quaternary structure, interacts with snoRNA U3. Interacts with MPP10. Component of the ribosomal small subunit (SSU) processome composed of at least 40 protein subunits and snoRNA U3.

The protein resides in the nucleus. It localises to the nucleolus. Functionally, involved in nucleolar processing of pre-18S ribosomal RNA and ribosome assembly. The protein is U3 small nucleolar RNA-associated protein 21 homolog of Schizosaccharomyces pombe (strain 972 / ATCC 24843) (Fission yeast).